We begin with the raw amino-acid sequence, 142 residues long: Hemoglobin subunit alpha (142 aa).

At Ser1 the chain carries N-acetylserine. Positions 1-142 constitute a Globin domain; it reads SLSDKDKAAV…VALALAERYR (142 aa). An O2-binding site is contributed by His59. Residue His88 coordinates heme b.

It belongs to the globin family. As to quaternary structure, heterotetramer of two alpha chains and two beta chains. As to expression, red blood cells.

Functionally, involved in oxygen transport from gills to the various peripheral tissues. This is Hemoglobin subunit alpha (hba) from Gymnodraco acuticeps (Antarctic dragonfish).